Reading from the N-terminus, the 243-residue chain is PF03932 family protein CutC (243 aa).

It belongs to the CutC family.

The protein resides in the cytoplasm. This Histophilus somni (strain 2336) (Haemophilus somnus) protein is PF03932 family protein CutC.